The sequence spans 421 residues: Subtilisin-like protease 2 (421 aa).

Positions 1-16 are cleaved as a signal peptide; it reads MQLLNFGLLLLPFVAG. A propeptide spanning residues 17–122 is cleaved from the precursor; the sequence is DLAPQPEPLL…VHPDQHVYLA (106 aa). One can recognise an Inhibitor I9 domain in the interval 36-122; sequence QYIVTLKEGL…VHPDQHVYLA (87 aa). The 291-residue stretch at 131–421 folds into the Peptidase S8 domain; that stretch reads RWGLGYMSSK…ERKFTLPKYY (291 aa). Residues Asp-169 and His-201 each act as charge relay system in the active site. Asn-248, Asn-261, and Asn-348 each carry an N-linked (GlcNAc...) asparagine glycan. The active-site Charge relay system is the Ser-357. The N-linked (GlcNAc...) asparagine glycan is linked to Asn-388.

This sequence belongs to the peptidase S8 family.

Its subcellular location is the secreted. Secreted subtilisin-like serine protease with keratinolytic activity that contributes to pathogenicity. The protein is Subtilisin-like protease 2 (SUB2) of Arthroderma benhamiae (strain ATCC MYA-4681 / CBS 112371) (Trichophyton mentagrophytes).